Reading from the N-terminus, the 202-residue chain is Probable thymidylate kinase (202 aa).

ATP is bound at residue 13–20; the sequence is GIDGSGKT.

The protein belongs to the thymidylate kinase family.

It catalyses the reaction dTMP + ATP = dTDP + ADP. The sequence is that of Probable thymidylate kinase from Picrophilus torridus (strain ATCC 700027 / DSM 9790 / JCM 10055 / NBRC 100828 / KAW 2/3).